The sequence spans 801 residues: Na(+)/H(+) antiporter subunit A1 (801 aa).

Helical transmembrane passes span 1–21, 28–48, 79–99, 117–137, 166–186, 206–226, 265–285, 300–320, 337–357, 373–393, 427–447, 472–492, 522–542, 591–611, 623–643, 646–666, 671–691, 707–727, and 764–784; these read MSLL…IPIL, IHLG…MLTL, LGLL…LYSI, LFMG…LYLF, LIIT…LAIP, PFFI…SAQF, IFAA…ITLF, ILAF…GIGA, FTAA…LFMI, LGGL…TALS, LGYL…VYSI, ILML…GLFP, GLTP…LLIV, LVII…SVPF, IFEV…LFAK, LFSI…FIFF, LALT…LCFY, LTNA…GLIA, and MDTL…YTMI.

Belongs to the CPA3 antiporters (TC 2.A.63) subunit A family. As to quaternary structure, may form a heterooligomeric complex that consists of seven subunits: mnhA1, mnhB1, mnhC1, mnhD1, mnhE1, mnhF1 and mnhG1.

It localises to the cell membrane. Mnh complex is a Na(+)/H(+) antiporter involved in Na(+) excretion. This is Na(+)/H(+) antiporter subunit A1 (mnhA1) from Staphylococcus aureus (strain Mu3 / ATCC 700698).